We begin with the raw amino-acid sequence, 175 residues long: Co-chaperone protein HscB homolog (175 aa).

Positions 7-79 (SHFDLFDLPA…LKRATYLLHL (73 aa)) constitute a J domain.

This sequence belongs to the HscB family. As to quaternary structure, interacts with HscA and stimulates its ATPase activity.

Its function is as follows. Co-chaperone involved in the maturation of iron-sulfur cluster-containing proteins. Seems to help targeting proteins to be folded toward HscA. The sequence is that of Co-chaperone protein HscB homolog from Paraburkholderia xenovorans (strain LB400).